The chain runs to 321 residues: Ribose-phosphate pyrophosphokinase (321 aa).

ATP contacts are provided by residues 44-46 and 103-104; these read DGE and RQ. 2 residues coordinate Mg(2+): histidine 137 and aspartate 179. The active site involves lysine 202. Residues arginine 204, aspartate 228, and 232–236 each bind D-ribose 5-phosphate; that span reads DTAGT.

The protein belongs to the ribose-phosphate pyrophosphokinase family. Class I subfamily. Homohexamer. The cofactor is Mg(2+).

The protein localises to the cytoplasm. The catalysed reaction is D-ribose 5-phosphate + ATP = 5-phospho-alpha-D-ribose 1-diphosphate + AMP + H(+). It participates in metabolic intermediate biosynthesis; 5-phospho-alpha-D-ribose 1-diphosphate biosynthesis; 5-phospho-alpha-D-ribose 1-diphosphate from D-ribose 5-phosphate (route I): step 1/1. In terms of biological role, involved in the biosynthesis of the central metabolite phospho-alpha-D-ribosyl-1-pyrophosphate (PRPP) via the transfer of pyrophosphoryl group from ATP to 1-hydroxyl of ribose-5-phosphate (Rib-5-P). The protein is Ribose-phosphate pyrophosphokinase of Staphylococcus haemolyticus (strain JCSC1435).